Reading from the N-terminus, the 232-residue chain is Small ribosomal subunit protein uS3 (232 aa).

In terms of domain architecture, KH type-2 spans 39–107 (VRQFLTKELA…PAQINIAEVR (69 aa)).

Belongs to the universal ribosomal protein uS3 family. Part of the 30S ribosomal subunit. Forms a tight complex with proteins S10 and S14.

Functionally, binds the lower part of the 30S subunit head. Binds mRNA in the 70S ribosome, positioning it for translation. The sequence is that of Small ribosomal subunit protein uS3 from Erwinia tasmaniensis (strain DSM 17950 / CFBP 7177 / CIP 109463 / NCPPB 4357 / Et1/99).